Reading from the N-terminus, the 146-residue chain is Hemoglobin cathodic subunit beta (146 aa).

Positions Gln2–Phe146 constitute a Globin domain. Residue His63 coordinates heme b.

Heterotetramer of two alpha and two beta chains. In terms of tissue distribution, red blood cells.

Its function is as follows. Involved in oxygen transport from the gills to various peripheral tissues. The chain is Hemoglobin cathodic subunit beta from Ophisurus serpens (Serpent eel).